The sequence spans 245 residues: MLQFTPPLQPATLILRYKRFLADIVTPAGEALTIHCANTGAMTGCATPGDTIWYSTSDNPKRKYPQSWELTQTQTGDWICVNTMRANELVNLAIEKNQIAELSGYNFVRKEVKYGEENSRIDLLLQAEDRRDCYIEVKSVTLLQQQCGYFPDAVTLRGQKHLRELQNRVVNGHRAVLFFAVLHTGIKQVAPARHIDRRYAELLVQAQQAGVEVICYGFQLSPDGIELNTRLPLLQDEMLSSENAE.

It belongs to the SfsA family.

The sequence is that of Sugar fermentation stimulation protein homolog from Yersinia pseudotuberculosis serotype I (strain IP32953).